Here is a 242-residue protein sequence, read N- to C-terminus: Immunity protein TsiV2 (242 aa).

3 helical membrane-spanning segments follow: residues 39-59, 66-86, and 118-138; these read VFGA…FADI, FWGF…LFMP, and FAWV…PLAF.

It is found in the host membrane. Its function is as follows. Immunity protein that plays a role in preventing early activation of toxin VasX. The chain is Immunity protein TsiV2 from Vibrio cholerae serotype O1 (strain ATCC 39315 / El Tor Inaba N16961).